The following is a 174-amino-acid chain: Adenylate kinase (174 aa).

The interval 12 to 41 (STGDMLRAAIKAGTPLGLEAKKIIDEGGLV) is NMP. AMP-binding positions include threonine 13, arginine 18, 39–41 (GLV), 67–70 (GFPR), and glutamine 74. Residues 104–141 (GRRVHLASGRTYHIAYNPPKVEGKDDVTGEDLIQRDDD) form an LID region. Residues arginine 105 and 114-115 (TY) each bind ATP. Arginine 138 and arginine 149 together coordinate AMP.

It belongs to the adenylate kinase family. Monomer.

The protein resides in the cytoplasm. It catalyses the reaction AMP + ATP = 2 ADP. It functions in the pathway purine metabolism; AMP biosynthesis via salvage pathway; AMP from ADP: step 1/1. Its function is as follows. Catalyzes the reversible transfer of the terminal phosphate group between ATP and AMP. Plays an important role in cellular energy homeostasis and in adenine nucleotide metabolism. This is Adenylate kinase from Neisseria animalis.